Reading from the N-terminus, the 333-residue chain is MLGWIKRLIRMVFQQVGVSMQSVLWSRKPYGSSRSIVRKIGTNLSLIQCPRVQFQINSHATEWSPSHPGEDAVASFADVGWVAKEEGECSARLRTEVRSRPPLQDDLLFFEKAPSRQISLPDFSQEEPQLKTPALANEEALQKICALENELAALRAQIAKIVTQQEQQNLTAGDLDSTTFGTIPPHPLPPPPPPPPPPLGLHQSISAVDLIKERREKRANAGKTLVKNSPKKPEMPNMLEILKDMNSVKLRSVKRSEQDVKPKPVDATDPAALIAEALKKKFAYRYRSDSQDEVEKGVPKSESEATSERVLFGPHMLKPTGKMKALIENVSDS.

Residue Ser119 is modified to Phosphoserine. Residues 286-307 (YRSDSQDEVEKGVPKSESEATS) show a composition bias toward basic and acidic residues. Residues 286 to 315 (YRSDSQDEVEKGVPKSESEATSERVLFGPH) are disordered.

Belongs to the MTFR1 family.

It localises to the mitochondrion. Its function is as follows. May play a role in mitochondrial aerobic respiration. May also regulate mitochondrial organization and fission. In Pongo abelii (Sumatran orangutan), this protein is Mitochondrial fission regulator 1 (MTFR1).